A 382-amino-acid chain; its full sequence is Toluene efflux pump periplasmic linker protein TtgD (382 aa).

Positions 1-23 (MRLERALRARQLIPLAAIWLLVG) are cleaved as a signal peptide. A lipid anchor (N-palmitoyl cysteine) is attached at Cys-24. A lipid anchor (S-diacylglycerol cysteine) is attached at Cys-24. A coiled-coil region spans residues 100 to 136 (YEALLARAEASLLTAQNLARRYERLLDTNAISQQQYD).

This sequence belongs to the membrane fusion protein (MFP) (TC 8.A.1) family.

The protein resides in the cell inner membrane. Its function is as follows. The periplasmic linker protein component of an inducible organic solvent efflux pump. Involved in export of toluene and styrene but not of m-xylene, propylbenzene or ethylbenzene. Is not involved in antibiotic or AMP efflux. This chain is Toluene efflux pump periplasmic linker protein TtgD (ttgD), found in Pseudomonas putida (strain DOT-T1E).